The sequence spans 270 residues: G-box-binding factor 4 (270 aa).

The interval 1-46 is disordered; sequence MASFKLMSSSNSDLSRRNSSSASSSPSIRSSHHLRPNPHADHSRIS. The segment covering 8–29 has biased composition (low complexity); it reads SSSNSDLSRRNSSSASSSPSIR. S27 is subject to Phosphoserine. Residues 187-250 enclose the bZIP domain; sequence AAQRQKRMIK…YKKLMEVLIP (64 aa). Residues 190 to 208 are basic motif; sequence RQKRMIKNRESAARSRERK. The interval 215–229 is leucine-zipper; the sequence is LETLAAKLEEENEQL. Residues 250–270 are disordered; it reads PVDEKPRPPSRPLSRSHSLEW. A compositionally biased stretch (low complexity) spans 261-270; sequence PLSRSHSLEW.

This sequence belongs to the bZIP family. In terms of assembly, DNA-binding heterodimer with GBF2 and GBF3; non DNA-binding homodimer.

Its subcellular location is the nucleus. Binds to the G-box motif (5'-CCACGTGG-3') of the rbcS-1A gene promoter. G-box and G-box-like motifs are cis-acting elements defined in promoters of certain plant genes which are regulated by such diverse stimuli as light-induction or hormone control. The sequence is that of G-box-binding factor 4 (GBF4) from Arabidopsis thaliana (Mouse-ear cress).